Here is an 82-residue protein sequence, read N- to C-terminus: Small ribosomal subunit protein bS18 (82 aa).

The protein belongs to the bacterial ribosomal protein bS18 family. In terms of assembly, part of the 30S ribosomal subunit. Forms a tight heterodimer with protein bS6.

Its function is as follows. Binds as a heterodimer with protein bS6 to the central domain of the 16S rRNA, where it helps stabilize the platform of the 30S subunit. This Sinorhizobium fredii (strain NBRC 101917 / NGR234) protein is Small ribosomal subunit protein bS18.